Here is a 186-residue protein sequence, read N- to C-terminus: ADP-ribosylation factor-like protein 6 (186 aa).

A lipid anchor (N-myristoyl glycine) is attached at Gly2. GTP-binding positions include 24 to 31, Thr50, 69 to 73, Gly72, 130 to 133, and Ala164; these read GLDNSGKT, DMSGQ, and NKMD. Thr50 contacts Mg(2+).

Belongs to the small GTPase superfamily. Arf family. Interacts with SEC61B, ARL6IP1, ARL6IP2, ARL6IP3, ARL6IP4 ARL6IP5 and ARL6IP6. Interacts (GTP-bound form) with the BBSome a complex that contains BBS1, BBS2, BBS4, BBS5, BBS7, BBS8/TTC8, BBS9 and BBIP10. Interacts (GTP-free form) with IFT27. In terms of tissue distribution, most abundant in brain and kidney. Expressed in heart and eye. Isoform 2 is expressed only in the retina.

Its subcellular location is the cell projection. The protein resides in the cilium membrane. It localises to the cytoplasm. It is found in the cytoskeleton. The protein localises to the cilium axoneme. Its subcellular location is the cilium basal body. In terms of biological role, involved in membrane protein trafficking at the base of the ciliary organelle. Mediates recruitment onto plasma membrane of the BBSome complex which would constitute a coat complex required for sorting of specific membrane proteins to the primary cilia. Together with BBS1, is necessary for correct trafficking of PKD1 to primary cilia. Together with the BBSome complex and LTZL1, controls SMO ciliary trafficking and contributes to the sonic hedgehog (SHH) pathway regulation. May regulate cilia assembly and disassembly and subsequent ciliary signaling events such as the Wnt signaling cascade. Isoform 2 may be required for proper retinal function and organization. In Mus musculus (Mouse), this protein is ADP-ribosylation factor-like protein 6 (Arl6).